The primary structure comprises 218 residues: Ras-related protein R-Ras (218 aa).

A disordered region spans residues 1 to 30 (MSSGAASGTGRGRPRGGGPGPRDPPPGETH). A compositionally biased stretch (gly residues) spans 7-20 (SGTGRGRPRGGGPG). Position 36 to 44 (36 to 44 (GGGGVGKSA)) interacts with GTP. Positions 58–66 (YDPTIEDSY) match the Effector region motif. GTP is bound by residues 83-87 (DTAGQ), 142-145 (NKAD), and 172-174 (SAK). Position 215 is a cysteine methyl ester (cysteine 215). Cysteine 215 carries the S-geranylgeranyl cysteine lipid modification. Positions 216 to 218 (VLL) are cleaved as a propeptide — removed in mature form.

It belongs to the small GTPase superfamily. Ras family. Interacts with PLCE1. Interacts (active GTP-bound form preferentially) with RGS14. Interacts with OSBPL3. Interacts with ZDHHC19. Post-translationally, S-palmitoylated by ZDHHC19, leading to increased association with membranes and with rafts/caveolae as well as enhanced cell viability.

Its subcellular location is the cell membrane. The catalysed reaction is GTP + H2O = GDP + phosphate + H(+). GTP-binding protein with GTPase activity, likely involved in the regulation of MAPK signaling pathway and thereby controlling multiple cellular processes. Regulates the organization of the actin cytoskeleton. With OSPBL3, modulates integrin beta-1 (ITGB1) activity. In Mus musculus (Mouse), this protein is Ras-related protein R-Ras (Rras).